The chain runs to 354 residues: Uroporphyrinogen decarboxylase (354 aa).

Substrate-binding positions include 27-31 (RQAGR), Asp-77, Tyr-154, Thr-209, and His-327.

The protein belongs to the uroporphyrinogen decarboxylase family. In terms of assembly, homodimer.

It is found in the cytoplasm. It catalyses the reaction uroporphyrinogen III + 4 H(+) = coproporphyrinogen III + 4 CO2. The protein operates within porphyrin-containing compound metabolism; protoporphyrin-IX biosynthesis; coproporphyrinogen-III from 5-aminolevulinate: step 4/4. In terms of biological role, catalyzes the decarboxylation of four acetate groups of uroporphyrinogen-III to yield coproporphyrinogen-III. The chain is Uroporphyrinogen decarboxylase from Citrobacter koseri (strain ATCC BAA-895 / CDC 4225-83 / SGSC4696).